Consider the following 361-residue polypeptide: 3-dehydroquinate synthase (361 aa).

NAD(+)-binding positions include 106–110 (GVVGD), 130–131 (TT), Lys143, and Lys152. Positions 185, 247, and 264 each coordinate Zn(2+).

The protein belongs to the sugar phosphate cyclases superfamily. Dehydroquinate synthase family. NAD(+) is required as a cofactor. The cofactor is Co(2+). Zn(2+) serves as cofactor.

It localises to the cytoplasm. It catalyses the reaction 7-phospho-2-dehydro-3-deoxy-D-arabino-heptonate = 3-dehydroquinate + phosphate. The protein operates within metabolic intermediate biosynthesis; chorismate biosynthesis; chorismate from D-erythrose 4-phosphate and phosphoenolpyruvate: step 2/7. Catalyzes the conversion of 3-deoxy-D-arabino-heptulosonate 7-phosphate (DAHP) to dehydroquinate (DHQ). This chain is 3-dehydroquinate synthase, found in Gloeobacter violaceus (strain ATCC 29082 / PCC 7421).